The following is a 116-amino-acid chain: MEEYHRHCDEVGFNADEAHNIVKECIDGVLGGEDYNQNNINQWTASIVEQSLTHLVKLGKAYKYIVTCAVVQRSAYGFHTASSCFWDTTSDGTCTVRWENRTMNCIVNVFAIAIVL.

Tyr4 is modified (3'-nitrotyrosine).

Belongs to the dynein light chain Tctex-type family. As to quaternary structure, homodimer. The cytoplasmic dynein 1 complex consists of two catalytic heavy chains (HCs) and a number of non-catalytic subunits presented by intermediate chains (ICs), light intermediate chains (LICs) and light chains (LCs); the composition seems to vary in respect to the IC, LIC and LC composition. The heavy chain homodimer serves as a scaffold for the probable homodimeric assembly of the respective non-catalytic subunits. The ICs and LICs bind directly to the HC dimer and the LCs assemble on the IC dimer. DYNLT1 and DYNLT3 compete for association with dynein IC (DYNC1I1 or DYNC1I2). Self-associates. Interacts with DYNC1I1 and DYNC1I2. Interacts with BUB3. Interacts with SATB1 in nucleus to form complex with matrix attachment regions (MARs) of DNA.

It is found in the nucleus. Its subcellular location is the cytoplasm. It localises to the cytoskeleton. The protein resides in the chromosome. The protein localises to the centromere. It is found in the kinetochore. Acts as one of several non-catalytic accessory components of the cytoplasmic dynein 1 complex that are thought to be involved in linking dynein to cargos and to adapter proteins that regulate dynein function. Cytoplasmic dynein 1 acts as a motor for the intracellular retrograde motility of vesicles and organelles along microtubules. Probably binds BUB3 as part of transport cargo. Required for the efficient progression through mitosis. This Canis lupus familiaris (Dog) protein is Dynein light chain Tctex-type 3 (DYNLT3).